We begin with the raw amino-acid sequence, 121 residues long: uncharacterized protein (121 aa).

3 helical membrane-spanning segments follow: residues 2–22, 42–62, and 89–109; these read VFVTIIIIINISYNIYNIYTI, FICIYVCISGGNMPLWAYILF, and IFFAFCCHHIWSLLPHHLSIF.

The protein localises to the membrane. This is an uncharacterized protein from Saccharomyces cerevisiae (strain ATCC 204508 / S288c) (Baker's yeast).